The sequence spans 156 residues: Protein eva-1 homolog A (156 aa).

The helical transmembrane segment at 40 to 60 (ALYFVSGVCIGLFLTLAALVM) threads the bilayer. The segment at 79-100 (DRECSDSSDSEDGSEDTASDLS) is disordered. The span at 84-96 (DSSDSEDGSEDTA) shows a compositional bias: acidic residues. At Thr110 the chain carries Phosphothreonine. At Ser118 the chain carries Phosphoserine.

This sequence belongs to the EVA1 family.

It localises to the endoplasmic reticulum membrane. Its subcellular location is the lysosome membrane. Its function is as follows. Acts as a regulator of programmed cell death, mediating both autophagy and apoptosis. The polypeptide is Protein eva-1 homolog A (Eva1a) (Mus musculus (Mouse)).